The following is a 76-amino-acid chain: MKEGIHPVYHETVIRCACGAEIPTGSTKKEIRVEICSKCHPFYTGKQKLVDSAGRIERFRRKYEKFQKKETPESTE.

Cys-16, Cys-18, Cys-36, and Cys-39 together coordinate Zn(2+).

Belongs to the bacterial ribosomal protein bL31 family. Type A subfamily. Part of the 50S ribosomal subunit. Requires Zn(2+) as cofactor.

Binds the 23S rRNA. The protein is Large ribosomal subunit protein bL31 of Syntrophobacter fumaroxidans (strain DSM 10017 / MPOB).